The sequence spans 344 residues: DNA polymerase IV (344 aa).

A UmuC domain is found at 2–183 (IMLIDFDYFF…IKINDIPGIG (182 aa)). Positions 6 and 105 each coordinate Mg(2+). The active site involves Glu-106.

Belongs to the DNA polymerase type-Y family. In terms of assembly, monomer. Mg(2+) is required as a cofactor.

It localises to the cytoplasm. The enzyme catalyses DNA(n) + a 2'-deoxyribonucleoside 5'-triphosphate = DNA(n+1) + diphosphate. Poorly processive, error-prone DNA polymerase involved in untargeted mutagenesis. Copies undamaged DNA at stalled replication forks, which arise in vivo from mismatched or misaligned primer ends. These misaligned primers can be extended by PolIV. Exhibits no 3'-5' exonuclease (proofreading) activity. May be involved in translesional synthesis. This is DNA polymerase IV from Picrophilus torridus (strain ATCC 700027 / DSM 9790 / JCM 10055 / NBRC 100828 / KAW 2/3).